Consider the following 278-residue polypeptide: S-formylglutathione hydrolase YeiG (278 aa).

Active-site charge relay system residues include serine 145, aspartate 223, and histidine 256.

This sequence belongs to the esterase D family.

It catalyses the reaction S-formylglutathione + H2O = formate + glutathione + H(+). Serine hydrolase involved in the detoxification of formaldehyde. Hydrolyzes S-formylglutathione to glutathione and formate. The polypeptide is S-formylglutathione hydrolase YeiG (yeiG) (Escherichia coli (strain UTI89 / UPEC)).